A 366-amino-acid polypeptide reads, in one-letter code: tRNA 2-selenouridine synthase (366 aa).

Residues 14-137 (LLENRPLIDV…IRSFLINTIE (124 aa)) enclose the Rhodanese domain. Cys-97 acts as the S-selanylcysteine intermediate in catalysis.

Belongs to the SelU family. In terms of assembly, monomer.

The catalysed reaction is 5-methylaminomethyl-2-thiouridine(34) in tRNA + selenophosphate + (2E)-geranyl diphosphate + H2O + H(+) = 5-methylaminomethyl-2-selenouridine(34) in tRNA + (2E)-thiogeraniol + phosphate + diphosphate. It carries out the reaction 5-methylaminomethyl-2-thiouridine(34) in tRNA + (2E)-geranyl diphosphate = 5-methylaminomethyl-S-(2E)-geranyl-thiouridine(34) in tRNA + diphosphate. The enzyme catalyses 5-methylaminomethyl-S-(2E)-geranyl-thiouridine(34) in tRNA + selenophosphate + H(+) = 5-methylaminomethyl-2-(Se-phospho)selenouridine(34) in tRNA + (2E)-thiogeraniol. It catalyses the reaction 5-methylaminomethyl-2-(Se-phospho)selenouridine(34) in tRNA + H2O = 5-methylaminomethyl-2-selenouridine(34) in tRNA + phosphate. Its function is as follows. Involved in the post-transcriptional modification of the uridine at the wobble position (U34) of tRNA(Lys), tRNA(Glu) and tRNA(Gln). Catalyzes the conversion of 2-thiouridine (S2U-RNA) to 2-selenouridine (Se2U-RNA). Acts in a two-step process involving geranylation of 2-thiouridine (S2U) to S-geranyl-2-thiouridine (geS2U) and subsequent selenation of the latter derivative to 2-selenouridine (Se2U) in the tRNA chain. The protein is tRNA 2-selenouridine synthase of Shewanella frigidimarina (strain NCIMB 400).